We begin with the raw amino-acid sequence, 154 residues long: Myoglobin (154 aa).

One can recognise a Globin domain in the interval 2–148; sequence VLSDAEWQLV…FRKDIAAKYK (147 aa). A Phosphoserine modification is found at serine 4. Nitrite is bound at residue histidine 65. Histidine 65 serves as a coordination point for O2. At threonine 68 the chain carries Phosphothreonine. Histidine 94 provides a ligand contact to heme b.

It belongs to the globin family. In terms of assembly, monomeric.

Its subcellular location is the cytoplasm. The protein localises to the sarcoplasm. The enzyme catalyses Fe(III)-heme b-[protein] + nitric oxide + H2O = Fe(II)-heme b-[protein] + nitrite + 2 H(+). The catalysed reaction is H2O2 + AH2 = A + 2 H2O. In terms of biological role, monomeric heme protein which primary function is to store oxygen and facilitate its diffusion within muscle tissues. Reversibly binds oxygen through a pentacoordinated heme iron and enables its timely and efficient release as needed during periods of heightened demand. Depending on the oxidative conditions of tissues and cells, and in addition to its ability to bind oxygen, it also has a nitrite reductase activity whereby it regulates the production of bioactive nitric oxide. Under stress conditions, like hypoxia and anoxia, it also protects cells against reactive oxygen species thanks to its pseudoperoxidase activity. This chain is Myoglobin (MB), found in Eschrichtius robustus (California gray whale).